A 58-amino-acid polypeptide reads, in one-letter code: uncharacterized protein (58 aa).

Residues 24 to 44 (LSVYLGLATTIVCIVLFFTML) form a helical membrane-spanning segment.

Its subcellular location is the membrane. This is an uncharacterized protein from Haemophilus influenzae (strain ATCC 51907 / DSM 11121 / KW20 / Rd).